An 860-amino-acid polypeptide reads, in one-letter code: Nuclear cap-binding protein complex subunit 1 (860 aa).

In terms of domain architecture, MIF4G spans 36–271 (CKDMLPDIRT…SNVKNALAND (236 aa)).

This sequence belongs to the NCBP1 family. As to quaternary structure, component of the nuclear cap-binding complex (CBC).

It is found in the nucleus. Its function is as follows. Component of the cap-binding complex (CBC) involved in the nuclear export of capped U snRNAs. The CBC complex is required for efficient pre-mRNA splicing through efficient commitment complex and spliceosome formation; and involved in rRNA processing at sites A0, A1 and A2. This chain is Nuclear cap-binding protein complex subunit 1 (CBC1), found in Eremothecium gossypii (strain ATCC 10895 / CBS 109.51 / FGSC 9923 / NRRL Y-1056) (Yeast).